The chain runs to 424 residues: Magnesium-chelatase subunit ChlI-1, chloroplastic (424 aa).

The N-terminal 60 residues, 1–60 (MASLLGTSSSAIWASPSLSSPSSKPSSSPICFRPGKLFGSKLNAGIQIRPKKNRSRYHVS), are a transit peptide targeting the chloroplast. At valine 61 the chain carries N-acetylvaline. Disulfide bonds link cysteine 102–cysteine 193 and cysteine 354–cysteine 396. An ATP-binding site is contributed by 119–126 (GDRGTGKS). Serine 355 is modified (phosphoserine).

Belongs to the Mg-chelatase subunits D/I family. As to quaternary structure, the magnesium chelatase complex is a heterotrimer consisting of subunits CHLI, CHLD and CHLH. Interacts with CHLH and CHLD.

The protein resides in the plastid. It localises to the chloroplast. It carries out the reaction protoporphyrin IX + Mg(2+) + ATP + H2O = Mg-protoporphyrin IX + ADP + phosphate + 3 H(+). Its pathway is porphyrin-containing compound metabolism; chlorophyll biosynthesis. With respect to regulation, redox regulation; active in reducing conditions, inactive in oxidizing conditions. Thioredoxins f and m mediate the reversible reductive activation of oxidized CHLI1. Functionally, involved in chlorophyll biosynthesis. Catalyzes the insertion of magnesium ion into protoporphyrin IX to yield Mg-protoporphyrin IX. The magnesium-chelatase is a complex of three subunits, CHLI, CHLD and CHLH. The reaction takes place in two steps, with an ATP-dependent activation followed by an ATP-dependent chelation step. Possesses high affinity for ATP and may play a major role in chlorophyll biosynthesis. Does not bind abscisic acid (ABA), but is a positive regulator of ABA signaling. May be involved in ABA signaling in the control of stomatal aperture, but does not seem to have an effect on ABA-induced gene expression. The sequence is that of Magnesium-chelatase subunit ChlI-1, chloroplastic (CHLI1) from Arabidopsis thaliana (Mouse-ear cress).